Reading from the N-terminus, the 440-residue chain is MKKFSVVIAGGGSTFTPGIVLMLLANQDRFPLRSLKFYDNDGARQETIAEACKVILKEQAPEIEFSYTTDPQAAFTDVDFVMAHIRVGKYPMREQDEKIPLRHGVLGQETCGPGGIAYGMRSIGGVLELVDYMEKYSPNAWMLNYSNPAAIVAEATRRLRPNAKILNICDMPIGIEGRMAQIVGLKDRKQMRVRYYGLNHFGWWTSIEDLDGNDLMPKLREYVAKYGYVPPSNDPHTEASWNDTFAKAKDVQALDPQTMPNTYLKYYLFPDYVVAHSNPERTRANEVMDHREKNVFSACRAIIAAGKSTAGDLEIDEHASYIVDLATAIAFNTQERMLLIVPNNGAIHNFDADAMVEIPCLVGHNGPEPLTVGDIPHFQKGLMSQQVAVEKLVVDAWEQRSYHKLWQAITLSKTVPSASVAKAILDDLIAANKDYWPELH.

Phe-4–Asp-70 serves as a coordination point for NAD(+). Substrate contacts are provided by Arg-93 and Asn-147. Mn(2+) is bound at residue Cys-169. Residue Asp-170 is the Proton donor of the active site. Mn(2+) is bound at residue His-200. Residue Tyr-263 is the Proton acceptor of the active site. Arg-283 is a binding site for substrate.

In terms of assembly, homodimer. Requires NAD(+) as cofactor. It depends on Mn(2+) as a cofactor. Co(2+) serves as cofactor. The cofactor is Ni(2+).

It catalyses the reaction alpha-maltose 6'-phosphate + H2O = D-glucose 6-phosphate + D-glucose. The protein operates within glycan biosynthesis; sucrose metabolism. In terms of biological role, is involved in the catabolism of alpha-glycosides accumulated via a phosphoenolpyruvate-dependent phosphotransferase system (PEP-PTS). Hydrolyzes a wide variety of 6-phospho-alpha-D-glucosides including maltose-6'-phosphate, isomaltose-6'-phosphate, maltitol-6-phosphate, trehalose-6-phosphate and the 6'-phosphorylated derivatives of the five linkage-isomeric alpha-D-glucosyl-D-fructoses: trehalulose-6'-phosphate, turanose-6'-phosphate, maltulose-6'-phosphate, leucrose-6'-phosphate, and palatinose-6'-phosphate. However, sucrose-6-phosphate is not a substrate for this enzyme. This is 6-phospho-alpha-glucosidase from Klebsiella pneumoniae.